The sequence spans 268 residues: Zinc transporter ZupT (268 aa).

The next 8 membrane-spanning stretches (helical) occupy residues 6–26, 37–57, 73–93, 126–146, 153–173, 189–209, 211–231, and 248–268; these read IIFA…GGVI, FLAG…FVEI, GGNW…AVID, VLTA…TFVA, IAIP…IAVA, WATL…ILLM, FLGP…MVFI, and TAIY…LLFI. Fe(2+) is bound by residues N136 and E139. Zn(2+) is bound by residues E139 and H164. Positions 165, 168, and 197 each coordinate Fe(2+). E168 lines the Zn(2+) pocket.

The protein belongs to the ZIP transporter (TC 2.A.5) family. ZupT subfamily.

The protein localises to the cell membrane. It catalyses the reaction Zn(2+)(in) = Zn(2+)(out). Mediates zinc uptake. May also transport other divalent cations. The protein is Zinc transporter ZupT of Corynebacterium efficiens (strain DSM 44549 / YS-314 / AJ 12310 / JCM 11189 / NBRC 100395).